A 254-amino-acid chain; its full sequence is ATP-dependent L-serine kinase SbnI (254 aa).

Residue Glu-20 is part of the active site. Ser-33 is a binding site for ADP. O-phospho-L-serine is bound at residue Ile-57. ADP is bound by residues Asp-58, Gly-59, His-61, and Arg-62. Gly-59 and His-61 together coordinate O-phospho-L-serine. O-phospho-L-serine is bound by residues Trp-98 and Arg-229.

Forms dimers and tetramers in solution. Predominantly forms dimers. Dimerization/oligomerization is not essential for kinase activity.

It carries out the reaction L-serine + ATP = O-phospho-L-serine + ADP + H(+). It functions in the pathway siderophore biosynthesis. With respect to regulation, binds heme and heme binding inhibits DNA binding. Free serine kinase that uses ATP to phosphorylate L-serine to yield O-phospho-L-serine and ADP. O-phospho-L-serine serves as a substrate for SbnA and is a precursor for staphyloferrin B biosynthesis. Is also a DNA-binding regulatory protein that senses heme to control gene expression for siderophore biosynthesis. Binds to DNA within the sbnC coding region and is required for expression of genes in the sbn operon from sbnD onward. The sequence is that of ATP-dependent L-serine kinase SbnI from Staphylococcus aureus (strain NCTC 8325 / PS 47).